We begin with the raw amino-acid sequence, 303 residues long: Recombination-associated protein RdgC (303 aa).

This sequence belongs to the RdgC family.

The protein localises to the cytoplasm. It localises to the nucleoid. May be involved in recombination. The protein is Recombination-associated protein RdgC of Yersinia pseudotuberculosis serotype O:1b (strain IP 31758).